We begin with the raw amino-acid sequence, 485 residues long: Zinc finger protein 639 (485 aa).

Positions 1–14 (MNEYPKKRKRKTLH) are enriched in basic residues. Positions 1-20 (MNEYPKKRKRKTLHPSRYSD) are disordered. Ser-60 is subject to Phosphoserine. Lys-76 participates in a covalent cross-link: Glycyl lysine isopeptide (Lys-Gly) (interchain with G-Cter in SUMO2). Ser-88 carries the phosphoserine modification. Residues Lys-177, Lys-181, and Lys-226 each participate in a glycyl lysine isopeptide (Lys-Gly) (interchain with G-Cter in SUMO2) cross-link. C2H2-type zinc fingers lie at residues 204-227 (YKCELCEFNSKYFSDLKQHMILKH), 233-255 (NVCRVCKESFSTNMLLIEHAKLH), 260-283 (YICKYCDYKTVIFENLSQHIADTH), 289-311 (YWCEQCDVQFSSSSELYLHFQEH), 374-397 (FVCQVCGFRSRLHTNVNRHVAIEH), 403-425 (HVCDDCGKGFSSMLEYCKHLNSH), 431-454 (YLCQYCEYSTGQIEDLKIHLDFKH), and 460-482 (HKCSDCLMRFGNERELISHLPVH). Residues 371–455 (KNFFVCQVCG…LKIHLDFKHS (85 aa)) are interaction with CTNNA2.

This sequence belongs to the krueppel C2H2-type zinc-finger protein family. As to quaternary structure, interacts with CTNNA2.

Its subcellular location is the nucleus. Functionally, binds DNA and may function as a transcriptional repressor. This Homo sapiens (Human) protein is Zinc finger protein 639 (ZNF639).